Consider the following 83-residue polypeptide: Protein CASPARIAN STRIP INTEGRITY FACTOR 1 (83 aa).

An N-terminal signal peptide occupies residues 1 to 22 (MGMSPLTVKKLGFIFMIVSASA). The interval 59-83 (MNTKDYGNNSPSPRLERPPFKLIPN) is disordered. Tyrosine 64 is subject to Sulfotyrosine. Hydroxyproline occurs at positions 69 and 71.

In terms of assembly, interacts with the specific receptor kinases GSO1 and GSO2. In terms of tissue distribution, expressed exclusively in the root stele.

In terms of biological role, peptide hormone required for contiguous Casparian strip diffusion barrier formation in roots via the regulation of CASPs protein expression and distribution in a GSO1-GSO2 signaling pathway. The Casparian strip is required for ion homeostasis (e.g. iron and potassium ions). The polypeptide is Protein CASPARIAN STRIP INTEGRITY FACTOR 1 (Arabidopsis thaliana (Mouse-ear cress)).